Consider the following 363-residue polypeptide: Peptide chain release factor 1 (363 aa).

At Gln237 the chain carries N5-methylglutamine. The segment covering 286 to 295 (EKRRSAEATT) has biased composition (basic and acidic residues). Positions 286-305 (EKRRSAEATTRRNLVGSGDR) are disordered.

It belongs to the prokaryotic/mitochondrial release factor family. Methylated by PrmC. Methylation increases the termination efficiency of RF1.

The protein localises to the cytoplasm. In terms of biological role, peptide chain release factor 1 directs the termination of translation in response to the peptide chain termination codons UAG and UAA. In Shewanella amazonensis (strain ATCC BAA-1098 / SB2B), this protein is Peptide chain release factor 1.